Consider the following 583-residue polypeptide: Threonine--tRNA ligase (583 aa).

The catalytic stretch occupies residues D185 to P478. Zn(2+) is bound by residues C278, H329, and H455.

This sequence belongs to the class-II aminoacyl-tRNA synthetase family. In terms of assembly, homodimer. Requires Zn(2+) as cofactor.

It is found in the cytoplasm. It catalyses the reaction tRNA(Thr) + L-threonine + ATP = L-threonyl-tRNA(Thr) + AMP + diphosphate + H(+). Catalyzes the attachment of threonine to tRNA(Thr) in a two-step reaction: L-threonine is first activated by ATP to form Thr-AMP and then transferred to the acceptor end of tRNA(Thr). Also edits incorrectly charged L-seryl-tRNA(Thr). The polypeptide is Threonine--tRNA ligase (Borrelia duttonii (strain Ly)).